The chain runs to 379 residues: UDP-4-amino-4-deoxy-L-arabinose--oxoglutarate aminotransferase (379 aa).

The residue at position 182 (Lys-182) is an N6-(pyridoxal phosphate)lysine.

It belongs to the DegT/DnrJ/EryC1 family. ArnB subfamily. Homodimer. Pyridoxal 5'-phosphate is required as a cofactor.

It catalyses the reaction UDP-4-amino-4-deoxy-beta-L-arabinose + 2-oxoglutarate = UDP-beta-L-threo-pentopyranos-4-ulose + L-glutamate. The protein operates within nucleotide-sugar biosynthesis; UDP-4-deoxy-4-formamido-beta-L-arabinose biosynthesis; UDP-4-deoxy-4-formamido-beta-L-arabinose from UDP-alpha-D-glucuronate: step 2/3. It participates in bacterial outer membrane biogenesis; lipopolysaccharide biosynthesis. Its function is as follows. Catalyzes the conversion of UDP-4-keto-arabinose (UDP-Ara4O) to UDP-4-amino-4-deoxy-L-arabinose (UDP-L-Ara4N). The modified arabinose is attached to lipid A and is required for resistance to polymyxin and cationic antimicrobial peptides. The chain is UDP-4-amino-4-deoxy-L-arabinose--oxoglutarate aminotransferase from Salmonella heidelberg (strain SL476).